A 92-amino-acid chain; its full sequence is YcgL domain-containing protein Shewana3_2381 (92 aa).

Residues 1–85 (MLCAVYKSSR…PQVNLLAEHR (85 aa)) enclose the YcgL domain.

The chain is YcgL domain-containing protein Shewana3_2381 from Shewanella sp. (strain ANA-3).